A 449-amino-acid chain; its full sequence is 3-phosphoshikimate 1-carboxyvinyltransferase (449 aa).

The interval 1 to 29 (MSHDSVPSPITARAGTPLRGRLRPPGDKS) is disordered. 3 residues coordinate 3-phosphoshikimate: K28, S29, and R33. K28 contributes to the phosphoenolpyruvate binding site. The phosphoenolpyruvate site is built by G101 and R129. Positions 175, 177, 330, and 357 each coordinate 3-phosphoshikimate. Residue Q177 coordinates phosphoenolpyruvate. Catalysis depends on D330, which acts as the Proton acceptor. Positions 361 and 405 each coordinate phosphoenolpyruvate.

The protein belongs to the EPSP synthase family. Monomer.

The protein localises to the cytoplasm. The catalysed reaction is 3-phosphoshikimate + phosphoenolpyruvate = 5-O-(1-carboxyvinyl)-3-phosphoshikimate + phosphate. It participates in metabolic intermediate biosynthesis; chorismate biosynthesis; chorismate from D-erythrose 4-phosphate and phosphoenolpyruvate: step 6/7. In terms of biological role, catalyzes the transfer of the enolpyruvyl moiety of phosphoenolpyruvate (PEP) to the 5-hydroxyl of shikimate-3-phosphate (S3P) to produce enolpyruvyl shikimate-3-phosphate and inorganic phosphate. This Methylobacterium sp. (strain 4-46) protein is 3-phosphoshikimate 1-carboxyvinyltransferase.